The following is an 853-amino-acid chain: Leucine--tRNA ligase (853 aa).

The 'HIGH' region signature appears at 40–50 (PYPSGKMHMGH). The 'KMSKS' region motif lies at 609–613 (KMSKS). K612 contacts ATP.

The protein belongs to the class-I aminoacyl-tRNA synthetase family.

It localises to the cytoplasm. It carries out the reaction tRNA(Leu) + L-leucine + ATP = L-leucyl-tRNA(Leu) + AMP + diphosphate. In Brachyspira hyodysenteriae (strain ATCC 49526 / WA1), this protein is Leucine--tRNA ligase.